Reading from the N-terminus, the 406-residue chain is Acetate kinase (406 aa).

Mg(2+) is bound at residue Asn7. Lys14 contacts ATP. A substrate-binding site is contributed by Arg90. Catalysis depends on Asp147, which acts as the Proton donor/acceptor. ATP-binding positions include 207–211, 283–285, and 331–335; these read HLGNG, DMR, and GVGEN. Residue Glu385 coordinates Mg(2+).

This sequence belongs to the acetokinase family. Homodimer. Mg(2+) serves as cofactor. Requires Mn(2+) as cofactor.

Its subcellular location is the cytoplasm. It carries out the reaction acetate + ATP = acetyl phosphate + ADP. The protein operates within metabolic intermediate biosynthesis; acetyl-CoA biosynthesis; acetyl-CoA from acetate: step 1/2. In terms of biological role, catalyzes the formation of acetyl phosphate from acetate and ATP. Can also catalyze the reverse reaction. This is Acetate kinase from Thermosipho melanesiensis (strain DSM 12029 / CIP 104789 / BI429).